We begin with the raw amino-acid sequence, 189 residues long: Small ribosomal subunit protein uS5 (189 aa).

Residues 27 to 90 (FEERLLEAAR…EDAKKKTIRV (64 aa)) enclose the S5 DRBM domain.

It belongs to the universal ribosomal protein uS5 family. Part of the 30S ribosomal subunit. Contacts proteins S4 and S8.

In terms of biological role, with S4 and S12 plays an important role in translational accuracy. Its function is as follows. Located at the back of the 30S subunit body where it stabilizes the conformation of the head with respect to the body. This is Small ribosomal subunit protein uS5 from Hydrogenobaculum sp. (strain Y04AAS1).